The following is a 143-amino-acid chain: Large-conductance mechanosensitive channel (143 aa).

2 consecutive transmembrane segments (helical) span residues F10–S30 and G89–V109.

This sequence belongs to the MscL family. As to quaternary structure, homopentamer.

It localises to the cell inner membrane. Functionally, channel that opens in response to stretch forces in the membrane lipid bilayer. May participate in the regulation of osmotic pressure changes within the cell. This is Large-conductance mechanosensitive channel from Burkholderia cenocepacia (strain HI2424).